Here is a 231-residue protein sequence, read N- to C-terminus: ATP-dependent dethiobiotin synthetase BioD (231 aa).

13–18 (DVGKTV) contacts ATP. A Mg(2+)-binding site is contributed by Thr-17. Residue Lys-38 is part of the active site. ATP-binding positions include Asp-55, 116 to 119 (EGAG), and 176 to 177 (NR). Mg(2+) contacts are provided by Asp-55 and Glu-116.

Belongs to the dethiobiotin synthetase family. As to quaternary structure, homodimer. Mg(2+) is required as a cofactor.

It is found in the cytoplasm. It carries out the reaction (7R,8S)-7,8-diammoniononanoate + CO2 + ATP = (4R,5S)-dethiobiotin + ADP + phosphate + 3 H(+). It participates in cofactor biosynthesis; biotin biosynthesis; biotin from 7,8-diaminononanoate: step 1/2. Its function is as follows. Catalyzes a mechanistically unusual reaction, the ATP-dependent insertion of CO2 between the N7 and N8 nitrogen atoms of 7,8-diaminopelargonic acid (DAPA, also called 7,8-diammoniononanoate) to form a ureido ring. This chain is ATP-dependent dethiobiotin synthetase BioD, found in Vibrio cholerae serotype O1 (strain ATCC 39315 / El Tor Inaba N16961).